Consider the following 570-residue polypeptide: MTESIISSRTASISSKEGYEIRQGSTDSSSLDLEKKENAVDTTIAKPFDSDEDIADVEKAGGKKINNSLIDETFAFMQDAKKLDPLTPKQESKLKWKLYIYLLLMLGFLDMMLFIGKATLSYSTILGLFDDVHITSNQYNNLNTLFYVGYIVGQFPGHYIMQTFPLGKFVGLVTFSWSVIVFLHCCAYNYGGLIALRFFLGFTESCLLPAMEATMGMFFTHQEQAFLQPVFWISCLSCGIPAGFIAYGLEFVTKSIAPWKLFMIITGGITFFLSIFLFFYYPDNPSKARFLTDEEKLYTIDRVRKSTRGGIENKIFKKHQFIEALKDPITWLFTFAAFTLMLSNNLAYQQNLIFTSLNVSDLNSTLVGVALAGYNTVSAIIATFAMYLIPNQSAYHAMFWMLPSITGGIAFVALPWSNRIGELATMIIASDFGITYIIALGWTTATSTGYTKKLTRGLMFMVGYAIANIISPQLWQSRDAPRYYPAWIVQIVVAWFVTPIIYLVARVILARRNKQRKELKDKKIAEGSLETIEKTYVDTVDEFGNPVKVLIDNSMLDLTDMENLNFVYPL.

Over residues 1 to 15 (MTESIISSRTASISS) the composition is skewed to low complexity. The tract at residues 1 to 34 (MTESIISSRTASISSKEGYEIRQGSTDSSSLDLE) is disordered. Ser14 is modified (phosphoserine). The next 12 membrane-spanning stretches (helical) occupy residues 96–116 (WKLY…LFIG), 141–161 (NLNT…HYIM), 163–183 (TFPL…IVFL), 198–218 (FFLG…MGMF), 229–249 (PVFW…AYGL), 261–281 (LFMI…FFYY), 328–348 (PITW…NLAY), 369–389 (VALA…MYLI), 397–417 (AMFW…LPWS), 423–443 (LATM…LGWT), 457–477 (GLMF…LWQS), and 485–505 (PAWI…YLVA).

This sequence belongs to the major facilitator superfamily. Allantoate permease family.

The protein localises to the endoplasmic reticulum. It localises to the membrane. This is an uncharacterized protein from Schizosaccharomyces pombe (strain 972 / ATCC 24843) (Fission yeast).